Consider the following 751-residue polypeptide: Photosystem I P700 chlorophyll a apoprotein A1 (751 aa).

8 helical membrane-spanning segments follow: residues 73–96, 159–182, 198–222, 294–312, 349–372, 388–414, 436–458, and 533–551; these read VFSA…FHGA, LYTT…FHYH, LNHH…HVSL, TAHH…GHMY, WHAQ…HHMY, LSLF…IFMV, AIIS…LYIH, and FMVH…LILL. Positions 575 and 584 each coordinate [4Fe-4S] cluster. The next 2 helical transmembrane spans lie at 591–612 and 665–687; these read HVFL…HFSW and LSAY…LDIF. Position 676 (His676) interacts with chlorophyll a'. 2 residues coordinate chlorophyll a: Met683 and Tyr692. Trp693 serves as a coordination point for phylloquinone. The chain crosses the membrane as a helical span at residues 725–745; it reads AVGVAHYLLGGIATTWSFFLA.

Belongs to the PsaA/PsaB family. In terms of assembly, the PsaA/B heterodimer binds the P700 chlorophyll special pair and subsequent electron acceptors. PSI consists of a core antenna complex that captures photons, and an electron transfer chain that converts photonic excitation into a charge separation. The eukaryotic PSI reaction center is composed of at least 11 subunits. Requires P700 is a chlorophyll a/chlorophyll a' dimer, A0 is one or more chlorophyll a, A1 is one or both phylloquinones and FX is a shared 4Fe-4S iron-sulfur center. as cofactor.

The protein resides in the plastid. It is found in the chloroplast thylakoid membrane. The enzyme catalyses reduced [plastocyanin] + hnu + oxidized [2Fe-2S]-[ferredoxin] = oxidized [plastocyanin] + reduced [2Fe-2S]-[ferredoxin]. Its function is as follows. PsaA and PsaB bind P700, the primary electron donor of photosystem I (PSI), as well as the electron acceptors A0, A1 and FX. PSI is a plastocyanin/cytochrome c6-ferredoxin oxidoreductase, converting photonic excitation into a charge separation, which transfers an electron from the donor P700 chlorophyll pair to the spectroscopically characterized acceptors A0, A1, FX, FA and FB in turn. Oxidized P700 is reduced on the lumenal side of the thylakoid membrane by plastocyanin or cytochrome c6. The polypeptide is Photosystem I P700 chlorophyll a apoprotein A1 (Stigeoclonium helveticum (Green alga)).